Here is a 463-residue protein sequence, read N- to C-terminus: Bifunctional protein HldE (463 aa).

Residues 1–315 (MRKILVIGDL…LILNQTHPKI (315 aa)) form a ribokinase region. 191–194 (NRFE) serves as a coordination point for ATP. D260 is a catalytic residue. The cytidylyltransferase stretch occupies residues 334–463 (FTNGCFDILH…IEKIKRAYND (130 aa)).

The protein in the N-terminal section; belongs to the carbohydrate kinase PfkB family. It in the C-terminal section; belongs to the cytidylyltransferase family. In terms of assembly, homodimer.

The enzyme catalyses D-glycero-beta-D-manno-heptose 7-phosphate + ATP = D-glycero-beta-D-manno-heptose 1,7-bisphosphate + ADP + H(+). It catalyses the reaction D-glycero-beta-D-manno-heptose 1-phosphate + ATP + H(+) = ADP-D-glycero-beta-D-manno-heptose + diphosphate. It functions in the pathway nucleotide-sugar biosynthesis; ADP-L-glycero-beta-D-manno-heptose biosynthesis; ADP-L-glycero-beta-D-manno-heptose from D-glycero-beta-D-manno-heptose 7-phosphate: step 1/4. Its pathway is nucleotide-sugar biosynthesis; ADP-L-glycero-beta-D-manno-heptose biosynthesis; ADP-L-glycero-beta-D-manno-heptose from D-glycero-beta-D-manno-heptose 7-phosphate: step 3/4. In terms of biological role, catalyzes the phosphorylation of D-glycero-D-manno-heptose 7-phosphate at the C-1 position to selectively form D-glycero-beta-D-manno-heptose-1,7-bisphosphate. Its function is as follows. Catalyzes the ADP transfer from ATP to D-glycero-beta-D-manno-heptose 1-phosphate, yielding ADP-D-glycero-beta-D-manno-heptose. This Helicobacter acinonychis (strain Sheeba) protein is Bifunctional protein HldE.